The chain runs to 1407 residues: Clustered mitochondria protein (1407 aa).

The span at 1 to 12 (MAGKSNKSKAKR) shows a compositional bias: basic residues. 2 disordered regions span residues 1-36 (MAGK…PVAA) and 83-103 (IPKA…PKQG). Polar residues predominate over residues 14-24 (AQSTTTNSTTD). One can recognise a Clu domain in the interval 384 to 670 (PDHKRDAARA…RVTPRDANYT (287 aa)). The tract at residues 724–760 (IDGEANGASNSDQKSISDKQNTTAEDYAAGSSESSKS) is disordered. Residues 730 to 747 (GASNSDQKSISDKQNTTA) show a composition bias toward polar residues. 5 TPR repeats span residues 1025–1058 (AKDL…LQQV), 1067–1100 (ANCC…NERC), 1109–1142 (AHSY…LGLS), 1151–1184 (AATF…NERL), and 1193–1226 (AVCY…LVKQ). The disordered stretch occupies residues 1358–1407 (VSSEKGGENGEAKVQEKKESSENGKTENLAPAGLGAGLTSLDKKKQKAKK). A compositionally biased stretch (basic and acidic residues) spans 1362-1382 (KGGENGEAKVQEKKESSENGK).

This sequence belongs to the CLU family.

It localises to the cytoplasm. In terms of biological role, mRNA-binding protein involved in proper cytoplasmic distribution of mitochondria. Together with REC2, REC3 and FMT/CLU, contributes to the establishment of the cellular volume devoted to the chloroplast compartment. This Arabidopsis thaliana (Mouse-ear cress) protein is Clustered mitochondria protein.